We begin with the raw amino-acid sequence, 548 residues long: Chaperone Ric-8A (548 aa).

Disordered regions lie at residues 443-484 and 517-548; these read DPGH…EGMT and GKMTSMEPHELHHLASQQFGESNNSDSDSDTN.

The protein belongs to the synembryn family.

It localises to the cytoplasm. The protein resides in the cell cortex. Chaperone that specifically binds and folds nascent G alpha proteins prior to G protein heterotrimer formation, promoting their stability and activity: folds GNAI1, GNAO1, GNA13 and GNAQ. Does not fold G(s) G-alpha proteins GNAS nor GNAL. Also acts as a guanine nucleotide exchange factor (GEF) for G alpha proteins by stimulating exchange of bound GDP for free GTP. In Danio rerio (Zebrafish), this protein is Chaperone Ric-8A (ric8a).